A 297-amino-acid polypeptide reads, in one-letter code: Coiled-coil domain-containing protein 159 (297 aa).

A coiled-coil region spans residues 147–297; the sequence is EELELVREEV…SKSGRSFPPA (151 aa). The tract at residues 256–297 is disordered; sequence LRGHKGHQCLSPPLPSWDSDSDCDQDLSQPPFSKSGRSFPPA.

As to quaternary structure, interacts with DYNLT2. Interacts with GGNBP1. Interacts with OSBP2.

In terms of biological role, functions during spermatid development; may participate in the centrosome reduction procedure of spermatids and is required for the formation of the connecting piece/sperm head-tail coupling apparatus (HTCA) and the correct and tight attachment of the flagellum to the nuclear envelope. The protein is Coiled-coil domain-containing protein 159 (CCDC159) of Homo sapiens (Human).